Reading from the N-terminus, the 311-residue chain is Putative dihydroorotate dehydrogenase A (fumarate) (311 aa).

Residues lysine 45, 69-73, and asparagine 128 each bind substrate; that span reads NSMGL. 45-46 is an FMN binding site; sequence KT. Residue asparagine 128 coordinates FMN. Cysteine 131 serves as the catalytic Nucleophile. Residues lysine 165 and valine 193 each contribute to the FMN site. 194-195 contributes to the substrate binding site; that stretch reads NS. FMN-binding positions include glycine 220, 248–249, and 270–271; these read GG and GT.

This sequence belongs to the dihydroorotate dehydrogenase family. Type 1 subfamily. As to quaternary structure, homodimer. It depends on FMN as a cofactor.

It localises to the cytoplasm. The catalysed reaction is (S)-dihydroorotate + fumarate = orotate + succinate. Its pathway is pyrimidine metabolism; UMP biosynthesis via de novo pathway. In terms of biological role, catalyzes the conversion of dihydroorotate to orotate with fumarate as the electron acceptor. The protein is Putative dihydroorotate dehydrogenase A (fumarate) (pyrD) of Streptococcus pyogenes serotype M5 (strain Manfredo).